The following is a 203-amino-acid chain: Ribosome maturation factor RimP (203 aa).

Over residues 1-21 (MSDSEATTSTDRSESNSTATI) the composition is skewed to polar residues. Residues 1–23 (MSDSEATTSTDRSESNSTATIHN) are disordered.

Belongs to the RimP family.

The protein resides in the cytoplasm. In terms of biological role, required for maturation of 30S ribosomal subunits. In Paenarthrobacter aurescens (strain TC1), this protein is Ribosome maturation factor RimP.